A 490-amino-acid polypeptide reads, in one-letter code: Phosphoethanolamine N-methyltransferase 3 (490 aa).

S-adenosyl-L-homocysteine-binding residues include Gly-60, Arg-65, Asp-81, Asp-106, Val-107, and Asn-125. Residues Ser-158, Ser-163, Gly-164, Arg-168, and Tyr-175 each contribute to the phosphocholine site. N-methylethanolamine phosphate is bound by residues 244–245 and Tyr-253; that span reads QY. Phosphocholine is bound at residue Tyr-253. S-adenosyl-L-homocysteine-binding residues include Val-262, Ser-263, Gly-289, Asp-311, Asp-337, Cys-338, and Arg-354. Phosphocholine is bound by residues Tyr-385, Tyr-399, Arg-403, Tyr-405, and Lys-471. Residues Tyr-385, Tyr-399, 403-405, and Lys-471 contribute to the N-methylethanolamine phosphate site; that span reads RGY.

Belongs to the class I-like SAM-binding methyltransferase superfamily. PEAMT family. Expressed in root vasculature, shoots, rosettes leaves, cauline leaves, sepals, petals, anther filaments and ovules. Highly expressed in leaf vasculature.

It is found in the cytoplasm. The catalysed reaction is phosphoethanolamine + S-adenosyl-L-methionine = N-methylethanolamine phosphate + S-adenosyl-L-homocysteine + H(+). The enzyme catalyses N-methylethanolamine phosphate + S-adenosyl-L-methionine = N,N-dimethylethanolamine phosphate + S-adenosyl-L-homocysteine + H(+). It catalyses the reaction N,N-dimethylethanolamine phosphate + S-adenosyl-L-methionine = phosphocholine + S-adenosyl-L-homocysteine + H(+). It participates in phospholipid metabolism; phosphatidylcholine biosynthesis; phosphocholine from phosphoethanolamine: step 1/1. Its function is as follows. Involved in phosphocholine biosynthesis. Catalyzes the N-methylation of phosphoethanolamine, phosphomonomethylethanolamine and phosphodimethylethanolamine, the three methylation steps required to convert phosphoethanolamine to phosphocholine (PC). In association with NMT1, regulates PC homeostasis, phase transition at the shoot apex, coordinated organ development, and fertility. In associtation with NMT1, involved in phosphatidylcholine biosynthesis and vascular development. In Arabidopsis thaliana (Mouse-ear cress), this protein is Phosphoethanolamine N-methyltransferase 3.